Reading from the N-terminus, the 770-residue chain is DNA ligase 1 (770 aa).

The segment covering Met-1–Gln-18 has biased composition (low complexity). The disordered stretch occupies residues Met-1–Asp-27. NAD(+) is bound by residues Asp-57–Asp-61, Ser-106–Leu-107, and Glu-142. Lys-144 acts as the N6-AMP-lysine intermediate in catalysis. The NAD(+) site is built by Arg-165, Glu-202, Lys-318, and Lys-342. Zn(2+) contacts are provided by Cys-439, Cys-442, Cys-458, and Cys-464. Residues Ser-657 to Ala-746 form the BRCT domain. Residues Gly-741 to Ala-770 form a disordered region. Acidic residues predominate over residues Ala-744 to Glu-753. Residues Gln-759–Ala-770 show a composition bias toward basic and acidic residues.

This sequence belongs to the NAD-dependent DNA ligase family. LigA subfamily. Requires Mg(2+) as cofactor. Mn(2+) serves as cofactor.

It carries out the reaction NAD(+) + (deoxyribonucleotide)n-3'-hydroxyl + 5'-phospho-(deoxyribonucleotide)m = (deoxyribonucleotide)n+m + AMP + beta-nicotinamide D-nucleotide.. Functionally, DNA ligase that catalyzes the formation of phosphodiester linkages between 5'-phosphoryl and 3'-hydroxyl groups in double-stranded DNA using NAD as a coenzyme and as the energy source for the reaction. It is essential for DNA replication and repair of damaged DNA. This is DNA ligase 1 from Pseudarthrobacter chlorophenolicus (strain ATCC 700700 / DSM 12829 / CIP 107037 / JCM 12360 / KCTC 9906 / NCIMB 13794 / A6) (Arthrobacter chlorophenolicus).